The chain runs to 112 residues: Seminal vesicle secretory protein 4 (112 aa).

Positions 1-21 (MKSTSLFLCSLLLLLVTGAIG) are cleaved as a signal peptide. The segment at 26-112 (EKYSQSEEVV…RSRFAQDVLN (87 aa)) is disordered. Low complexity-rich tracts occupy residues 36-47 (SESFASGPSSGS) and 85-97 (RSSG…GESS).

Belongs to the SVP2/SVP5/SVP6 family. Testis.

The protein resides in the secreted. The protein localises to the extracellular space. This Rattus norvegicus (Rat) protein is Seminal vesicle secretory protein 4 (Svs4).